The following is a 396-amino-acid chain: Pectinesterase (396 aa).

The N-terminal stretch at 1 to 21 (MQSKTLYLKATALLGGCTVFA) is a signal peptide. A substrate-binding site is contributed by Thr174. Asp232 serves as the catalytic Proton donor. Residue Asp259 is the Nucleophile of the active site. Substrate contacts are provided by Arg324 and Trp326.

This sequence belongs to the pectinesterase family.

The protein resides in the secreted. The catalysed reaction is [(1-&gt;4)-alpha-D-galacturonosyl methyl ester](n) + n H2O = [(1-&gt;4)-alpha-D-galacturonosyl](n) + n methanol + n H(+). The protein operates within glycan metabolism; pectin degradation; 2-dehydro-3-deoxy-D-gluconate from pectin: step 1/5. In terms of biological role, involved in maceration and soft-rotting of plant tissue. In Ralstonia nicotianae (strain ATCC BAA-1114 / GMI1000) (Ralstonia solanacearum), this protein is Pectinesterase (pme).